The chain runs to 130 residues: Protein ApaG (130 aa).

Positions 3–127 (RALTRDIEVV…FSLDSPGLLR (125 aa)) constitute an ApaG domain. The interval 63 to 83 (EVTGPGVVGEQPRLSPGDTYE) is disordered.

The polypeptide is Protein ApaG (Rhizobium etli (strain ATCC 51251 / DSM 11541 / JCM 21823 / NBRC 15573 / CFN 42)).